The sequence spans 270 residues: 4-hydroxy-tetrahydrodipicolinate reductase (270 aa).

NAD(+)-binding positions include 11-16 and E37; that span reads GASGRM. Residue R38 coordinates NADP(+). NAD(+) contacts are provided by residues 101-103 and 125-128; these read GTT and SPNM. H158 acts as the Proton donor/acceptor in catalysis. H159 is a (S)-2,3,4,5-tetrahydrodipicolinate binding site. The active-site Proton donor is the K162. Residue 168–169 coordinates (S)-2,3,4,5-tetrahydrodipicolinate; the sequence is GT.

Belongs to the DapB family.

It is found in the cytoplasm. The catalysed reaction is (S)-2,3,4,5-tetrahydrodipicolinate + NAD(+) + H2O = (2S,4S)-4-hydroxy-2,3,4,5-tetrahydrodipicolinate + NADH + H(+). The enzyme catalyses (S)-2,3,4,5-tetrahydrodipicolinate + NADP(+) + H2O = (2S,4S)-4-hydroxy-2,3,4,5-tetrahydrodipicolinate + NADPH + H(+). It participates in amino-acid biosynthesis; L-lysine biosynthesis via DAP pathway; (S)-tetrahydrodipicolinate from L-aspartate: step 4/4. In terms of biological role, catalyzes the conversion of 4-hydroxy-tetrahydrodipicolinate (HTPA) to tetrahydrodipicolinate. The sequence is that of 4-hydroxy-tetrahydrodipicolinate reductase from Shewanella denitrificans (strain OS217 / ATCC BAA-1090 / DSM 15013).